A 586-amino-acid polypeptide reads, in one-letter code: Kelch-like protein 7 (586 aa).

Residues 44–111 form the BTB domain; sequence CDVILMVQER…AYTARISVNS (68 aa). Residues 146–248 enclose the BACK domain; it reads CLGISVLAEC…SKNFLSKTVQ (103 aa). Kelch repeat units lie at residues 294-336, 337-382, 383-430, 431-481, 483-528, and 530-575; these read RIAL…FWDN, VVYI…AAEG, KIYT…EANG, LIYV…FVKD, IFAV…AVGS, and VYVL…CVVD.

Homodimer. Component of the BCR(KLHL7) E3 ubiquitin ligase complex, at least composed of CUL3 and KLHL7 and RBX1. In terms of tissue distribution, widely expressed, with highest levels in adult and fetal heart, CNS and adult testis.

It localises to the nucleus. The protein localises to the cytoplasm. Its pathway is protein modification; protein ubiquitination. Substrate-specific adapter of a BCR (BTB-CUL3-RBX1) E3 ubiquitin ligase complex. The BCR(KLHL7) complex acts by mediating ubiquitination and subsequent degradation of substrate proteins. Probably mediates 'Lys-48'-linked ubiquitination. This Homo sapiens (Human) protein is Kelch-like protein 7 (KLHL7).